A 101-amino-acid chain; its full sequence is Movement protein (101 aa).

Residues 30–50 (EVAILSFVALICFYLLYLWVL) traverse the membrane as a helical segment. Positions 75-101 (VDRSNPIPNLPAPPSQGNPGPFVPGTG) are disordered.

The protein belongs to the mastrevirus movement protein family. Interacts with the capsid protein (CP). Part of a MP-CP-viral DNA complex.

It is found in the host membrane. Its function is as follows. Involved in the viral transport within, and between cells. In Maize streak virus genotype A (isolate South Africa) (MSV), this protein is Movement protein.